A 207-amino-acid chain; its full sequence is Large ribosomal subunit protein uL4 (207 aa).

Positions 50–75 are disordered; the sequence is KTKTRSEVAGSGKKPFKQKGTGNARQ.

It belongs to the universal ribosomal protein uL4 family. In terms of assembly, part of the 50S ribosomal subunit.

One of the primary rRNA binding proteins, this protein initially binds near the 5'-end of the 23S rRNA. It is important during the early stages of 50S assembly. It makes multiple contacts with different domains of the 23S rRNA in the assembled 50S subunit and ribosome. Functionally, forms part of the polypeptide exit tunnel. This Pelobacter propionicus (strain DSM 2379 / NBRC 103807 / OttBd1) protein is Large ribosomal subunit protein uL4.